Here is a 559-residue protein sequence, read N- to C-terminus: CTP synthase (559 aa).

An amidoligase domain region spans residues 1-283; the sequence is MSTSRTTTNN…DTFLIRRLDL (283 aa). Serine 25 contacts CTP. Residue serine 25 participates in UTP binding. Residues 26 to 31 and aspartate 83 each bind ATP; that span reads SLGKGL. Mg(2+) is bound by residues aspartate 83 and glutamate 157. CTP-binding positions include 164 to 166, 204 to 209, and lysine 240; these read DIE and KTKPTQ. UTP-binding positions include 204–209 and lysine 240; that span reads KTKPTQ. Residues 308 to 557 form the Glutamine amidotransferase type-1 domain; that stretch reads TVGIVGKYVD…VAAALAAAVT (250 aa). Residue glycine 371 participates in L-glutamine binding. The Nucleophile; for glutamine hydrolysis role is filled by cysteine 398. L-glutamine is bound by residues 399 to 402, glutamate 421, and arginine 482; that span reads LGLQ. Active-site residues include histidine 530 and glutamate 532.

It belongs to the CTP synthase family. Homotetramer.

It catalyses the reaction UTP + L-glutamine + ATP + H2O = CTP + L-glutamate + ADP + phosphate + 2 H(+). The enzyme catalyses L-glutamine + H2O = L-glutamate + NH4(+). It carries out the reaction UTP + NH4(+) + ATP = CTP + ADP + phosphate + 2 H(+). It participates in pyrimidine metabolism; CTP biosynthesis via de novo pathway; CTP from UDP: step 2/2. Allosterically activated by GTP, when glutamine is the substrate; GTP has no effect on the reaction when ammonia is the substrate. The allosteric effector GTP functions by stabilizing the protein conformation that binds the tetrahedral intermediate(s) formed during glutamine hydrolysis. Inhibited by the product CTP, via allosteric rather than competitive inhibition. Catalyzes the ATP-dependent amination of UTP to CTP with either L-glutamine or ammonia as the source of nitrogen. Regulates intracellular CTP levels through interactions with the four ribonucleotide triphosphates. This chain is CTP synthase, found in Corynebacterium efficiens (strain DSM 44549 / YS-314 / AJ 12310 / JCM 11189 / NBRC 100395).